The primary structure comprises 306 residues: Anamorsin (306 aa).

An N-terminal SAM-like domain region spans residues 6 to 172; that stretch reads IAPGQRVAVI…KPNFEVGSSS (167 aa). Positions 173 to 224 are linker; the sequence is QLKLSFAKKTSPSGKPSVDPATAKLWTLSASDMNDEEMDLLDSDELLDSEDL. [2Fe-2S] cluster is bound by residues C237, C246, C249, and C251. Residues 237-251 form a fe-S binding site A region; the sequence is CKEKGKKKACKNCTC. [4Fe-4S] cluster is bound by residues C270, C273, C281, and C284. 2 consecutive short sequence motifs (cx2C motif) follow at residues 270 to 273 and 281 to 284; these read CGNC and CASC. The interval 270–284 is fe-S binding site B; sequence CGNCYLGDAFRCASC.

This sequence belongs to the anamorsin family. As to quaternary structure, monomer. Interacts with NDOR1. Interacts with CHCHD4. It depends on [2Fe-2S] cluster as a cofactor. The cofactor is [4Fe-4S] cluster.

The protein localises to the cytoplasm. Its subcellular location is the nucleus. It localises to the mitochondrion intermembrane space. Its function is as follows. Component of the cytosolic iron-sulfur (Fe-S) protein assembly (CIA) machinery required for the maturation of extramitochondrial Fe-S proteins. Part of an electron transfer chain functioning in an early step of cytosolic Fe-S biogenesis, facilitating the de novo assembly of a [4Fe-4S] cluster on the scaffold complex NUBP1-NUBP2. Electrons are transferred to CIAPIN1 from NADPH via the FAD- and FMN-containing protein NDOR1. NDOR1-CIAPIN1 are also required for the assembly of the diferric tyrosyl radical cofactor of ribonucleotide reductase (RNR), probably by providing electrons for reduction during radical cofactor maturation in the catalytic small subunit. Has anti-apoptotic effects in the cell. Involved in negative control of cell death upon cytokine withdrawal. Promotes development of hematopoietic cells. This Gallus gallus (Chicken) protein is Anamorsin.